A 281-amino-acid chain; its full sequence is 2-dehydro-3-deoxyphosphooctonate aldolase (281 aa).

This sequence belongs to the KdsA family.

Its subcellular location is the cytoplasm. It carries out the reaction D-arabinose 5-phosphate + phosphoenolpyruvate + H2O = 3-deoxy-alpha-D-manno-2-octulosonate-8-phosphate + phosphate. Its pathway is carbohydrate biosynthesis; 3-deoxy-D-manno-octulosonate biosynthesis; 3-deoxy-D-manno-octulosonate from D-ribulose 5-phosphate: step 2/3. It functions in the pathway bacterial outer membrane biogenesis; lipopolysaccharide biosynthesis. The sequence is that of 2-dehydro-3-deoxyphosphooctonate aldolase from Pseudomonas savastanoi pv. phaseolicola (strain 1448A / Race 6) (Pseudomonas syringae pv. phaseolicola (strain 1448A / Race 6)).